Here is a 587-residue protein sequence, read N- to C-terminus: Phosphatidate phosphatase APP1 (587 aa).

2 disordered regions span residues 1–28 (MNSQ…RMGK) and 150–178 (PPHL…SENR). Low complexity-rich tracts occupy residues 9-22 (SSSS…PTSG) and 163-174 (SQSSIESSLSSK). The DXDXT motif motif lies at 281–285 (DIDDT). Positions 452-521 (QQRPMQMTKS…NRQLPNLDAN (70 aa)) are disordered. An interaction with SH3 domain of ABP1 region spans residues 467–483 (RRPPPPPIPSTQKPSLT).

Monomer. Interacts with ABP1. Mg(2+) is required as a cofactor. In terms of processing, N-glycosylated.

The protein localises to the cytoplasm. It is found in the cytoskeleton. The protein resides in the actin patch. It carries out the reaction a 1,2-diacyl-sn-glycero-3-phosphate + H2O = a 1,2-diacyl-sn-glycerol + phosphate. The enzyme catalyses 1,2-di-(9Z-octadecenoyl)-sn-glycero-3-phosphate + H2O = 1,2-di-(9Z-octadecenoyl)-sn-glycerol + phosphate. Inhibited by N-ethylmaleimide. Mg(2+)-dependent phosphatidate (PA) phosphatase which catalyzes the dephosphorylation of PA to yield diacylglycerol. May play a role in vesicular trafficking through its PAP activity at cortical actin patches. Can also utilize diacylglycerol pyrophosphate and lyso-PA as substrates with specificity constants 4- and 7-fold lower, respectively, when compared with PA. The polypeptide is Phosphatidate phosphatase APP1 (APP1) (Saccharomyces cerevisiae (strain ATCC 204508 / S288c) (Baker's yeast)).